The sequence spans 108 residues: uncharacterized protein (108 aa).

A helical membrane pass occupies residues 64–84 (LFIIYYYYYLLICLSPHFFPI).

It is found in the membrane. This is an uncharacterized protein from Schizosaccharomyces pombe (strain 972 / ATCC 24843) (Fission yeast).